A 349-amino-acid chain; its full sequence is uncharacterized protein (349 aa).

A compositionally biased stretch (polar residues) spans His-116–Gly-135. The interval His-116–Tyr-148 is disordered.

This is an uncharacterized protein from Caenorhabditis elegans.